A 307-amino-acid polypeptide reads, in one-letter code: Recombination-associated protein RdgC (307 aa).

The protein belongs to the RdgC family.

It localises to the cytoplasm. The protein resides in the nucleoid. Functionally, may be involved in recombination. The chain is Recombination-associated protein RdgC from Burkholderia cenocepacia (strain ATCC BAA-245 / DSM 16553 / LMG 16656 / NCTC 13227 / J2315 / CF5610) (Burkholderia cepacia (strain J2315)).